A 193-amino-acid chain; its full sequence is Thymidine kinase (193 aa).

ATP-binding positions include 9 to 16 and 87 to 90; these read STMNAGKS and DEAN. Glu88 serves as the catalytic Proton acceptor. Residues Cys145, Cys147, Cys182, and His185 each contribute to the Zn(2+) site.

This sequence belongs to the thymidine kinase family. Homotetramer.

It is found in the cytoplasm. It catalyses the reaction thymidine + ATP = dTMP + ADP + H(+). The sequence is that of Thymidine kinase from Agrobacterium fabrum (strain C58 / ATCC 33970) (Agrobacterium tumefaciens (strain C58)).